We begin with the raw amino-acid sequence, 906 residues long: Cadherin-2 (906 aa).

The first 25 residues, 1–25, serve as a signal peptide directing secretion; that stretch reads MCRIAGAPRTLLPLLAALLQASVEA. Positions 26-159 are excised as a propeptide; the sequence is SGEIALCKTG…HSGALQRQKR (134 aa). Cadherin domains follow at residues 160–267, 268–382, 383–497, 498–603, and 604–717; these read DWVI…RPEF, LHQV…PPEF, TAMT…NPYF, APNP…DNAP, and QVLP…RIVG. Topologically, residues 160-724 are extracellular; sequence DWVIPPINLP…IVGAGLGTGA (565 aa). A Ca(2+)-binding site is contributed by E170. N190 carries an N-linked (GlcNAc...) asparagine glycan. The Ca(2+) site is built by D226, E228, D259, M260, N261, D262, and N263. Residue N273 is glycosylated (N-linked (GlcNAc...) asparagine). The Ca(2+) site is built by D293, D295, and N301. Residue N325 is glycosylated (N-linked (GlcNAc...) asparagine). D353 lines the Ca(2+) pocket. N402, N572, N651, and N692 each carry an N-linked (GlcNAc...) asparagine glycan. The helical transmembrane segment at 725–745 threads the bilayer; that stretch reads IIAILLCIIILLILVLMFVVW. The Cytoplasmic segment spans residues 746 to 906; the sequence is MKRRDKERQA…LADMYGGGDD (161 aa). Positions 863-880 are enriched in low complexity; the sequence is SGSTAGSLSSLNSSSSGG. A disordered region spans residues 863-883; that stretch reads SGSTAGSLSSLNSSSSGGDQD.

Homodimer (via extracellular region). Can also form heterodimers with other cadherins (via extracellular region). Dimerization occurs in trans, i.e. with a cadherin chain from another cell. Interacts with CDCP1. Interacts with PCDH8; this complex may also include TAOK2. The interaction with PCDH8 may lead to internalization through TAOK2/p38 MAPK pathway. Identified in a complex containing FGFR4, NCAM1, CDH2, PLCG1, FRS2, SRC, SHC1, GAP43 and CTTN. May interact with OBSCN (via protein kinase domain 2). Interacts with FBXO45. Cleaved by MMP24. Ectodomain cleavage leads to the generation of a soluble 90 kDa N-terminal soluble fragment and a 45 kDa membrane-bound C-terminal fragment 1 (CTF1), which is further cleaved by gamma-secretase into a 35 kDa. Cleavage in neural stem cells by MMP24 affects CDH2-mediated anchorage of neural stem cells to ependymocytes in the adult subependymal zone, leading to modulate neural stem cell quiescence. Post-translationally, may be phosphorylated by OBSCN. In terms of processing, O-glycosylated on Ser and Thr residues. In terms of tissue distribution, expressed in cardiac muscle (at protein level).

The protein resides in the cell membrane. It localises to the sarcolemma. It is found in the cell junction. Its subcellular location is the adherens junction. The protein localises to the desmosome. The protein resides in the cell surface. Functionally, calcium-dependent cell adhesion protein; preferentially mediates homotypic cell-cell adhesion by dimerization with a CDH2 chain from another cell. Cadherins may thus contribute to the sorting of heterogeneous cell types. Acts as a regulator of neural stem cells quiescence by mediating anchorage of neural stem cells to ependymocytes in the adult subependymal zone: upon cleavage by MMP24, CDH2-mediated anchorage is affected, leading to modulate neural stem cell quiescence. Plays a role in cell-to-cell junction formation between pancreatic beta cells and neural crest stem (NCS) cells, promoting the formation of processes by NCS cells. Required for proper neurite branching. Required for pre- and postsynaptic organization. CDH2 may be involved in neuronal recognition mechanism. In hippocampal neurons, may regulate dendritic spine density. In Mus musculus (Mouse), this protein is Cadherin-2 (Cdh2).